The primary structure comprises 543 residues: CTP synthase (543 aa).

The tract at residues 1–265 (MARFIFITGG…DSEVLRAFGI (265 aa)) is amidoligase domain. Ser-13 is a binding site for CTP. Ser-13 is a binding site for UTP. Residue 14–19 (SLGKGL) coordinates ATP. Tyr-54 lines the L-glutamine pocket. Asp-71 provides a ligand contact to ATP. Positions 71 and 139 each coordinate Mg(2+). Residues 146–148 (DIE), 186–191 (KTKPTQ), and Lys-222 each bind CTP. UTP contacts are provided by residues 186–191 (KTKPTQ) and Lys-222. Residues 291 to 542 (TIGVVGKYVS…IEAAVKQSRL (252 aa)) enclose the Glutamine amidotransferase type-1 domain. Gly-354 serves as a coordination point for L-glutamine. Cys-381 acts as the Nucleophile; for glutamine hydrolysis in catalysis. Residues 382-385 (LGMQ), Glu-405, and Arg-470 each bind L-glutamine. Residues His-515 and Glu-517 contribute to the active site.

The protein belongs to the CTP synthase family. Homotetramer.

The enzyme catalyses UTP + L-glutamine + ATP + H2O = CTP + L-glutamate + ADP + phosphate + 2 H(+). It catalyses the reaction L-glutamine + H2O = L-glutamate + NH4(+). The catalysed reaction is UTP + NH4(+) + ATP = CTP + ADP + phosphate + 2 H(+). It participates in pyrimidine metabolism; CTP biosynthesis via de novo pathway; CTP from UDP: step 2/2. Allosterically activated by GTP, when glutamine is the substrate; GTP has no effect on the reaction when ammonia is the substrate. The allosteric effector GTP functions by stabilizing the protein conformation that binds the tetrahedral intermediate(s) formed during glutamine hydrolysis. Inhibited by the product CTP, via allosteric rather than competitive inhibition. In terms of biological role, catalyzes the ATP-dependent amination of UTP to CTP with either L-glutamine or ammonia as the source of nitrogen. Regulates intracellular CTP levels through interactions with the four ribonucleotide triphosphates. The chain is CTP synthase from Sphingopyxis alaskensis (strain DSM 13593 / LMG 18877 / RB2256) (Sphingomonas alaskensis).